The primary structure comprises 344 residues: GDSL esterase/lipase At1g73610 (344 aa).

A signal peptide spans 1–24 (MNCLMFFKMLLAFSFISLFYVGNA). Asn-30 carries N-linked (GlcNAc...) asparagine glycosylation. The active-site Nucleophile is Ser-42. Active-site residues include Asp-319 and His-322.

It belongs to the 'GDSL' lipolytic enzyme family.

It localises to the secreted. The sequence is that of GDSL esterase/lipase At1g73610 from Arabidopsis thaliana (Mouse-ear cress).